The chain runs to 350 residues: Serine-threonine kinase receptor-associated protein (350 aa).

WD repeat units follow at residues 12-56, 57-96, 98-137, 141-179, 180-212, 221-262, and 263-302; these read GHTR…GTFL, GHKGAVWGATLNKDATKAATAAADFTAKVWDAVSGDELMT, AHKHIVKTVDFTQDSNYLLTGGQDKLLRIYDLNKPEAEPK, GHTSGIKKALWCSEDKQILSADDKTVRLWDHATMTEVKS, LNFNMSVSSMEYIPEGEILVITYGRSIAFHSAV, EAPA…ESYK, and GHFGPIHCVRFSPDGELYASGSEDGTLRLWQTVVGKTYGL. Residues Ser312, Ser335, and Ser338 each carry the phosphoserine modification. The segment at 326–350 is disordered; it reads AEEELEEIASENSDSIYSSTPEVKA. The span at 337-350 shows a compositional bias: polar residues; it reads NSDSIYSSTPEVKA. The residue at position 342 (Tyr342) is a Phosphotyrosine.

The protein belongs to the WD repeat STRAP family. As to quaternary structure, part of the core SMN complex that contains SMN1, GEMIN2/SIP1, DDX20/GEMIN3, GEMIN4, GEMIN5, GEMIN6, GEMIN7, GEMIN8 and STRAP/UNRIP. Part of the SMN-Sm complex that contains SMN1, GEMIN2/SIP1, DDX20/GEMIN3, GEMIN4, GEMIN5, GEMIN6, GEMIN7, GEMIN8, STRAP/UNRIP and the Sm proteins SNRPB, SNRPD1, SNRPD2, SNRPD3, SNRPE, SNRPF and SNRPG. Interacts directly with GEMIN6 and GEMIN7. Associates with the SMN complex in the cytoplasm but not in the nucleus. Also interacts with CSDE1/UNR and MAWBP. Interacts with PDPK1. Interacts with TRIM48.

The protein localises to the cytoplasm. The protein resides in the nucleus. Its function is as follows. The SMN complex catalyzes the assembly of small nuclear ribonucleoproteins (snRNPs), the building blocks of the spliceosome, and thereby plays an important role in the splicing of cellular pre-mRNAs. Most spliceosomal snRNPs contain a common set of Sm proteins SNRPB, SNRPD1, SNRPD2, SNRPD3, SNRPE, SNRPF and SNRPG that assemble in a heptameric protein ring on the Sm site of the small nuclear RNA to form the core snRNP (Sm core). In the cytosol, the Sm proteins SNRPD1, SNRPD2, SNRPE, SNRPF and SNRPG are trapped in an inactive 6S pICln-Sm complex by the chaperone CLNS1A that controls the assembly of the core snRNP. To assemble core snRNPs, the SMN complex accepts the trapped 5Sm proteins from CLNS1A forming an intermediate. Binding of snRNA inside 5Sm triggers eviction of the SMN complex, thereby allowing binding of SNRPD3 and SNRPB to complete assembly of the core snRNP. STRAP plays a role in the cellular distribution of the SMN complex. Negatively regulates TGF-beta signaling but positively regulates the PDPK1 kinase activity by enhancing its autophosphorylation and by significantly reducing the association of PDPK1 with 14-3-3 protein. This Rattus norvegicus (Rat) protein is Serine-threonine kinase receptor-associated protein (Strap).